The chain runs to 157 residues: Large ribosomal subunit protein eL24 (157 aa).

Lys2 participates in a covalent cross-link: Glycyl lysine isopeptide (Lys-Gly) (interchain with G-Cter in SUMO2). Glu4 is modified (ADP-ribosyl glutamic acid). An N6-acetyllysine; alternate modification is found at Lys27. Residue Lys27 forms a Glycyl lysine isopeptide (Lys-Gly) (interchain with G-Cter in SUMO2); alternate linkage. Residue Lys35 forms a Glycyl lysine isopeptide (Lys-Gly) (interchain with G-Cter in SUMO2) linkage. Lys77 carries the post-translational modification N6-acetyllysine. The residue at position 83 (Thr83) is a Phosphothreonine. The residue at position 86 (Ser86) is a Phosphoserine. Lys93 carries the N6-acetyllysine modification. Positions 106-117 (EQAIRAAKEAKK) are enriched in basic and acidic residues. A disordered region spans residues 106 to 157 (EQAIRAAKEAKKAKQASKKTAMAAAKAPTKAAPKQKIVKPVKVSAPRVGGKR). A compositionally biased stretch (low complexity) spans 123-140 (KKTAMAAAKAPTKAAPKQ). The residue at position 131 (Lys131) is an N6-succinyllysine. A Glycyl lysine isopeptide (Lys-Gly) (interchain with G-Cter in SUMO2) cross-link involves residue Lys147. A Phosphoserine modification is found at Ser149.

It belongs to the eukaryotic ribosomal protein eL24 family. As to quaternary structure, component of the large ribosomal subunit. Post-translationally, mono-ADP-ribosylation at Glu-4 by PARP16 inhibits polysome assembly and mRNA loading, thereby inhibiting protein translation.

It localises to the cytoplasm. In terms of biological role, component of the large ribosomal subunit. The ribosome is a large ribonucleoprotein complex responsible for the synthesis of proteins in the cell. This is Large ribosomal subunit protein eL24 (RPL24) from Bos taurus (Bovine).